Here is a 361-residue protein sequence, read N- to C-terminus: Outer mitochondrial transmembrane helix translocase (361 aa).

Residues 1-15 lie on the Mitochondrial intermembrane side of the membrane; that stretch reads MVHAETFSRPLSRNE. The helical transmembrane segment at 16-32 threads the bilayer; that stretch reads VVGLIFRLTIFGAVTYF. The Cytoplasmic portion of the chain corresponds to 33–361; the sequence is TIKWMVDAID…QNVLTHVCLD (329 aa). An ATP-binding site is contributed by 133–140; sequence GPPGCGKT. The residue at position 322 (Ser322) is a Phosphoserine.

The protein belongs to the AAA ATPase family. MSP1 subfamily. In terms of assembly, interacts with GRIA2 and GRIP1 in an ATP-dependent manner. ATAD1-catalyzed ATP hydrolysis disrupts not only its binding to GRIA2 and GRIP1, but also interaction between GRIP1 and GRIA2, leading to AMPAR complex disassembly.

The protein resides in the mitochondrion outer membrane. It is found in the peroxisome membrane. It localises to the postsynaptic cell membrane. The enzyme catalyses [protein]-with a C-terminal TM segment(out) + ATP + H2O = [protein]-with a C-terminal TM segment(in) + ADP + phosphate + H(+). Its function is as follows. Outer mitochondrial translocase required to remove mislocalized tail-anchored transmembrane proteins on mitochondria. Specifically recognizes and binds tail-anchored transmembrane proteins: acts as a dislocase that mediates the ATP-dependent extraction of mistargeted tail-anchored transmembrane proteins from the mitochondrion outer membrane. Also plays a critical role in regulating the surface expression of AMPA receptors (AMPAR), thereby regulating synaptic plasticity and learning and memory. Required for NMDA-stimulated AMPAR internalization and inhibition of GRIA1 and GRIA2 recycling back to the plasma membrane; these activities are ATPase-dependent. The chain is Outer mitochondrial transmembrane helix translocase from Bos taurus (Bovine).